Consider the following 485-residue polypeptide: Proline betaine:corrinoid methyltransferase (485 aa).

The protein belongs to the trimethylamine methyltransferase family. In terms of assembly, the proline betaine:THF methyl transfer system is composed of two methyltransferases, MtpB and MtqA, and the corrinoid protein MtqC.

The enzyme catalyses Co(I)-[quaternary-amine-specific corrinoid protein] + L-proline betaine + H(+) = methyl-Co(III)-[quaternary-amine-specific corrinoid protein] + N-methyl-L-proline. Its function is as follows. Involved in the degradation of the quaternary amine L-proline betaine. Component of a corrinoid-dependent methyltransferase system that transfers a methyl group from L-proline betaine to tetrahydrofolate (THF), forming methyl-THF, a key intermediate in the Wood-Ljungdahl acetogenesis pathway. MtpB catalyzes the methylation of the corrinoid protein MtqC, using L-proline betaine as the methyl donor. Shows weak activity with some other quaternary amines, including carnitine, phosphocholine, glycine betaine or betonicine, but cannot methylate free cob(I)alamin. This is Proline betaine:corrinoid methyltransferase from Eubacterium limosum.